The following is a 2193-amino-acid chain: Non-reducing polyketide synthase esdpA (2193 aa).

One can recognise a Starter acyltransferase (SAT) domain in the interval 90–252 (NVLLAPLTVL…AKVQVNGRYH (163 aa)). The 417-residue stretch at 381-797 (DECVAIVGAA…GNNTVIIVCE (417 aa)) folds into the Ketosynthase family 3 (KS3) domain. Residues cysteine 546, histidine 682, and histidine 720 each act as for beta-ketoacyl synthase activity in the active site. Residues 906–1158 (VFSGQSGMTV…YFVDAVRRIK (253 aa)) enclose the Malonyl-CoA:ACP transacylase (MAT) domain. Serine 992 functions as the For acyl/malonyl transferase activity in the catalytic mechanism. Residues 1265–1392 (PPMLSLENFS…GRVVLEDRRR (128 aa)) form an N-terminal hotdog fold region. In terms of domain architecture, PKS/mFAS DH spans 1265–1569 (PPMLSLENFS…FVKISSHILQ (305 aa)). Positions 1419 to 1569 (VFSASGSIAY…FVKISSHILQ (151 aa)) are C-terminal hotdog fold. The Proton donor; for dehydratase activity role is filled by aspartate 1479. The Carrier domain occupies 1723–1799 (RILSDSMIKL…ELHDLMQSHP (77 aa)). Serine 1759 is modified (O-(pantetheine 4'-phosphoryl)serine). Residues 1944-2177 (YHGSEHKLLR…GFTHVDWSND (234 aa)) are methyltransferase (CMeT) domain.

Pantetheine 4'-phosphate is required as a cofactor.

It functions in the pathway secondary metabolite biosynthesis; terpenoid biosynthesis. In terms of biological role, non-reducing polyketide synthase; part of the cluster that mediates the biosynthesis of shearones, diterpenoid pyrones (DPs) which are structurally diverse meroterpenoids consisting of a diterpene linked by a pyrone, and which may exhibit a range of bioactivities. Whitin the pathway, esdpA takes part to the biosynthesis of the molecular scaffold via the production of the alpha-pyrone from one molecule of acetyl-CoA, two molecules of malonyl-CoA and one molecule of S-adenosyl-L-methionine (SAM). The molecular scaffold is commonly biosynthesized by a series of enzymes including the non-reducing polyketide synthase (NR-PKS) esdpA that generates an alpha-pyrone; the prenyltransferase esdpC that attaches a geranylgeranyl pyrophosphate (GGPP) produced by the GGPP synthase (GGPPS) esdpD onto the pyrone unit; the FAD-dependent monooxygenase esdpE that converts an olefin on the diterpene unit into an epoxide; and the terpene cyclase esdpB that catalyzes the cyclization reactions to give the molecular backbone shearone A. In the modification steps, esdpF oxidizes the hydroxy group to a ketone at C-3 and esdpG then attaches hydroxy groups at both C-11 and C-12. After that, esdpI hydroxylates at C-20 and esdpH hydroxylates at C-6'. The ether bridge is generated by nucleophilic attack of the hydroxy group at C-20 to the carbonyl carbon at C-3. EsdpH can also functions prior to esdpI. The different combinations of these modification enzymes lead to the production of diverse shearone derivatives, shearone I being the end product of the pathway. The alpha-ketoglutarate-dependent dioxygenase esdpJ seems not to be involved in this pathway. This Penicillium shearii (Eupenicillium shearii) protein is Non-reducing polyketide synthase esdpA.